The sequence spans 448 residues: Phosphoglucosamine mutase (448 aa).

S102 acts as the Phosphoserine intermediate in catalysis. Residues S102, D243, D245, and D247 each contribute to the Mg(2+) site. S102 bears the Phosphoserine mark.

The protein belongs to the phosphohexose mutase family. It depends on Mg(2+) as a cofactor. In terms of processing, activated by phosphorylation.

The catalysed reaction is alpha-D-glucosamine 1-phosphate = D-glucosamine 6-phosphate. In terms of biological role, catalyzes the conversion of glucosamine-6-phosphate to glucosamine-1-phosphate. This Mycobacterium bovis (strain ATCC BAA-935 / AF2122/97) protein is Phosphoglucosamine mutase.